Here is a 165-residue protein sequence, read N- to C-terminus: Cell division protein SepF (165 aa).

The interval 23–75 (DEYGDYAGDYETQETAPVATRSSKRESRPAPVSDLSERRRPASGPTGVVAELS) is disordered.

This sequence belongs to the SepF family. In terms of assembly, homodimer. Interacts with FtsZ.

The protein resides in the cytoplasm. Functionally, cell division protein that is part of the divisome complex and is recruited early to the Z-ring. Probably stimulates Z-ring formation, perhaps through the cross-linking of FtsZ protofilaments. Its function overlaps with FtsA. The protein is Cell division protein SepF of Nocardioides sp. (strain ATCC BAA-499 / JS614).